The following is a 2470-amino-acid chain: Serine/threonine-protein kinase mTor (2470 aa).

8 HEAT repeats span residues Gln-172–Gln-209, Ser-746–Gly-785, Leu-791–Arg-829, His-835–Tyr-873, Pro-962–Leu-999, Asp-1043–Thr-1080, Tyr-1083–Phe-1122, and Asp-1124–Lys-1160. An FAT domain is found at Leu-1349–Ser-1903. TPR repeat units lie at residues Ala-1407–Asp-1440 and Met-1718–Trp-1751. The stretch at Asn-1854 to Gln-1891 is one HEAT 9 repeat. The region spanning Ile-2077–Leu-2389 is the PI3K/PI4K catalytic domain. The interval Val-2083–Arg-2089 is G-loop. A catalytic loop region spans residues Gly-2256–Asn-2264. The segment at His-2276–Thr-2301 is activation loop. The disordered stretch occupies residues Ala-2364–Leu-2389. Residues Gly-2367–Gly-2376 show a composition bias toward gly residues. A compositionally biased stretch (polar residues) spans Met-2377–Glu-2386. An FATC domain is found at Lys-2438–Trp-2470.

Belongs to the PI3/PI4-kinase family. In terms of assembly, may be part of a minimal complex, TORC1, consisting of mTor, raptor and lst8. May be part of a minimal complex, TORC2, consisting of mTor, rictor and lst8. Self-associates; assembles into homomultimeric complexes. Component of a multiprotein complex.

It carries out the reaction L-seryl-[protein] + ATP = O-phospho-L-seryl-[protein] + ADP + H(+). It catalyses the reaction L-threonyl-[protein] + ATP = O-phospho-L-threonyl-[protein] + ADP + H(+). Its function is as follows. Promotes cell and tissue growth, maintains tissue homeostatis and controls responses to environmental stress and aging. Regulates growth during animal development by coupling growth factor signaling to nutrient availability. Central regulators of autophagy. May be involved in atg1 phosphorylation. May also be involved, directly or indirectly, in the control of neuronal function. Phosphorylates S6K/p70S6K, in vitro. May regulate the activity of S6K. Overexpression inhibits growth and reduces cell size. Affects the timing of neuronal cell differentiation. Hyperactivation of the signaling leads to accelerated differentiation, whereas inhibition of the signaling retards differentiation. Thus, in addition to controlling growth of the cell in which it resides, it can also influence growth of distant cells and organs during development via a humoral mechanism. As part of the TORC1 complex regulates energy homeostasis and promotes certain aspects of larval growth by negatively regulating REPTOR. REPTOR functions downstream of TORC1 to regulate the expression of stress response genes in response to TORC1 inhibition resulting from nutrient deprivation. When TORC1 activity is high it phosphorylates REPTOR which inhibits its recruitment into the nucleus and antagonizes their function. This function is essential under normal feeding conditions to promote TORC1-dependent growth during larval development and, in adults and larvae to prevent the REPTOR-dependent expression of nutrient stress response genes. In short, during development, it primarily controls growth, whereas in the adult, where there is relatively little growth, it controls aging and other aspects of nutrient-related physiology. Rag GTPases act as activators of TORC1 in response to amino acid signals. This is Serine/threonine-protein kinase mTor from Drosophila melanogaster (Fruit fly).